The following is a 364-amino-acid chain: Peptide chain release factor 1 (364 aa).

Gln238 carries the N5-methylglutamine modification. Residues 286–297 (DEKRQAEEDSTR) are compositionally biased toward basic and acidic residues. The disordered stretch occupies residues 286-315 (DEKRQAEEDSTRRNLVGSGDRSERIRTYNY).

It belongs to the prokaryotic/mitochondrial release factor family. In terms of processing, methylated by PrmC. Methylation increases the termination efficiency of RF1.

The protein resides in the cytoplasm. Peptide chain release factor 1 directs the termination of translation in response to the peptide chain termination codons UAG and UAA. The sequence is that of Peptide chain release factor 1 from Idiomarina loihiensis (strain ATCC BAA-735 / DSM 15497 / L2-TR).